Consider the following 257-residue polypeptide: MSLIDIQNLTIKNTSEKSLIKGIDLKIFSQQINALIGESGAGKSLIAKALLEYLPFDLSCTYDSYQFDGENVSRLSQYYGHTIGYISQNYAESFNDHTKLGKQLTAIYRKHYKGSKEEALSKVDKALSWVNLQSKDILNKYSFQLSGGQLERVYIASVLVLEPKLIIADEPVASLDALNGNQVMDLLQHIVLEHGQTLFIITHNLSHVLKYCQYIYVLKEGQIIERGNINHFKYEHLHPYTERLIKYRTQLKRDYYD.

Residues 4–245 form the ABC transporter domain; sequence IDIQNLTIKN…HLHPYTERLI (242 aa). ATP is bound at residue 37-44; that stretch reads GESGAGKS.

It belongs to the ABC transporter superfamily. In terms of assembly, the complex is composed of two ATP-binding proteins (NikD and NikE), two transmembrane proteins (NikB and NikC) and a solute-binding protein (NikA).

The protein localises to the cell membrane. It carries out the reaction Ni(2+)(out) + ATP + H2O = Ni(2+)(in) + ADP + phosphate + H(+). Functionally, part of the ABC transporter complex NikABCDE (Opp2) involved in nickel import. Probably responsible for energy coupling to the transport system. The sequence is that of Nickel import system ATP-binding protein NikD from Staphylococcus aureus (strain MW2).